The following is a 95-amino-acid chain: Protein K6 (95 aa).

A signal peptide spans 1-24 (MAPVHVLCCVSVLLATFYLTPTES).

The polypeptide is Protein K6 (K6) (Human herpesvirus 8 type P (isolate GK18) (HHV-8)).